The sequence spans 319 residues: Vomeronasal type-1 receptor 51 (319 aa).

Over 1–31 (MNEILFFSPQPLFSHMMNENSRVHTHSNLRH) the chain is Extracellular. The chain crosses the membrane as a helical span at residues 32–52 (IFFSEIGIGISGNSFLLLFHI). Residues 53–65 (LKFIHGHRSRLSD) lie on the Cytoplasmic side of the membrane. The helical transmembrane segment at 66–86 (LPIGLLSLIHLLMLLVMAFIA) threads the bilayer. Residues 87-109 (TDIFISWRGWDDIICKFLVYLYR) lie on the Extracellular side of the membrane. Cysteine 101 and cysteine 188 are disulfide-bonded. A helical transmembrane segment spans residues 110–130 (VLRGLSLCTTSMLSVLQAIIL). Over 131–150 (SPRSSCLAKFKRKSLHHISC) the chain is Cytoplasmic. The chain crosses the membrane as a helical span at residues 151 to 171 (AILFLSVLYMLIGSQLLVSII). Topologically, residues 172-203 (ATPNLTTNDFIYVTQSCSILPLSYVMQSMFST) are extracellular. The N-linked (GlcNAc...) asparagine glycan is linked to asparagine 175. A helical transmembrane segment spans residues 204–224 (LLVIRDVFLISLMVLSTWYMV). The Cytoplasmic segment spans residues 225-254 (ALLCRHRKKTQHLQGISLSPKTSPKQRATQ). The chain crosses the membrane as a helical span at residues 255–275 (TLLMLMSFFVLMTIYDTIVSC). Residues 276-285 (SRTMFLNDPT) are Extracellular-facing. A helical transmembrane segment spans residues 286 to 306 (SYNMQIFVVHIYATVSPFVFM). Residues 307–319 (STEKHIVNCLRSV) are Cytoplasmic-facing.

The protein belongs to the G-protein coupled receptor 1 family. In terms of tissue distribution, expressed in a subset of sensory neurons located in the apical layer of the vomeronasal organ.

The protein localises to the cell membrane. In terms of biological role, putative pheromone receptor implicated in the regulation of social as well as reproductive behavior. In Mus musculus (Mouse), this protein is Vomeronasal type-1 receptor 51 (Vmn1r51).